A 561-amino-acid chain; its full sequence is Putative transport protein YbjL (561 aa).

A run of 5 helical transmembrane segments spans residues 8–28, 32–52, 66–86, 94–114, and 158–178; these read LLNGNYILLLFVVLALGLCLG, LGSIQLGNSIGVLVVSLLLGQ, FMLFIFCVGVEAGPNFFSIFF, MLALVMVGSALVIALGLGKLF, and NLSLGYALTYLIGLVSLIVGA. 2 RCK C-terminal domains span residues 200–288 and 292–373; these read RGLD…SFRN and VFDR…RIGF. 5 helical membrane-spanning segments follow: residues 383–403, 406–426, 451–471, 475–495, and 540–560; these read LLAFCAFFVIGLMIGMITFQF, FSFGMGNAAGLLFAGIMLGFM, VFMAGVGLSAGSGINNGLGAI, MLIAGLIVSLVPVVICFLFGA, and AIANVLLTLAGTIIVMVWPGL.

Belongs to the AAE transporter (TC 2.A.81) family. YbjL subfamily.

The protein resides in the cell membrane. In Shigella boydii serotype 4 (strain Sb227), this protein is Putative transport protein YbjL.